A 305-amino-acid polypeptide reads, in one-letter code: MHVQDRHGRPVMSLRLSITGRCNVNCIYCHRDGMTSSRGELSAADIEKLCRVASDLGVGKIRLSGGEPLIRDDIVEIVERINNIGFRDISITTNGTLLEGYSAALSEAGLDRVNVSFDTLNPETYRFITRKDYLERVKSGITSAVDVGLDPVKINMVILRGVNHHEVWDMFEFCREKGAVLQIIELLKTESCHDDAVERYHCDITPIEAELAEMADRIRTRKFMQDRKKYYIDGGEIEVVRPMDNTRFCANCTRLRVTPDGKLKPCLLRNDNLVDTRDALRENDTGRLRELFFEAIRRRSPYYTP.

Residues 6–233 (RHGRPVMSLR…MQDRKKYYID (228 aa)) form the Radical SAM core domain. Arginine 15 serves as a coordination point for GTP. Positions 22 and 26 each coordinate [4Fe-4S] cluster. Tyrosine 28 contributes to the S-adenosyl-L-methionine binding site. Cysteine 29 is a binding site for [4Fe-4S] cluster. Arginine 62 contacts GTP. Glycine 66 contacts S-adenosyl-L-methionine. Threonine 92 provides a ligand contact to GTP. Serine 116 is a binding site for S-adenosyl-L-methionine. Lysine 153 is a binding site for GTP. Positions 249 and 252 each coordinate [4Fe-4S] cluster. 254 to 256 (RLR) contacts GTP. Position 266 (cysteine 266) interacts with [4Fe-4S] cluster.

This sequence belongs to the radical SAM superfamily. MoaA family. The cofactor is [4Fe-4S] cluster.

It catalyses the reaction GTP + AH2 + S-adenosyl-L-methionine = (8S)-3',8-cyclo-7,8-dihydroguanosine 5'-triphosphate + 5'-deoxyadenosine + L-methionine + A + H(+). Its pathway is cofactor biosynthesis; molybdopterin biosynthesis. In terms of biological role, catalyzes the cyclization of GTP to (8S)-3',8-cyclo-7,8-dihydroguanosine 5'-triphosphate. This chain is Probable GTP 3',8-cyclase, found in Methanothermobacter thermautotrophicus (strain ATCC 29096 / DSM 1053 / JCM 10044 / NBRC 100330 / Delta H) (Methanobacterium thermoautotrophicum).